A 419-amino-acid polypeptide reads, in one-letter code: MSSIETYMQSVGEQTRTASRAMMRATGAAKNQALLAMAEAILAQRAELQAANAKDVAAARANGLEAALLDRLTLSDRSIALMAEGLRQIAALPDPVGSITATSVRPNGMRVAQMRVPLGVIGIIYESRPNVTIDAAALCLKSGNATILRGGSEALHSNVALGRIVQAGLQAAGLPTAAVQVIDTTDRAAVGKLVTMTEHVDVIVPRGGKGLISRLAQEARVPLIKHLDGNCHVYVDAAADLAKAHDIAFNAKTYRYGVCGAMETLLVHADVAQRLLPVLGQALHEHGVELRGCARALQWLPEGKPADDADWATEYLGPILAVRVVDTIDEAMDHIARWGSGHTDAIVTENLSAAQRFQREVDSSSVYVNLPTCFADGFEYGLGAEIGISTNRLHARGPVGLEGLTTLKWVLNGEGQVRG.

This sequence belongs to the gamma-glutamyl phosphate reductase family.

It is found in the cytoplasm. The enzyme catalyses L-glutamate 5-semialdehyde + phosphate + NADP(+) = L-glutamyl 5-phosphate + NADPH + H(+). It functions in the pathway amino-acid biosynthesis; L-proline biosynthesis; L-glutamate 5-semialdehyde from L-glutamate: step 2/2. Its function is as follows. Catalyzes the NADPH-dependent reduction of L-glutamate 5-phosphate into L-glutamate 5-semialdehyde and phosphate. The product spontaneously undergoes cyclization to form 1-pyrroline-5-carboxylate. This chain is Gamma-glutamyl phosphate reductase, found in Bordetella parapertussis (strain 12822 / ATCC BAA-587 / NCTC 13253).